Reading from the N-terminus, the 151-residue chain is Large ribosomal subunit protein bL9 (151 aa).

This sequence belongs to the bacterial ribosomal protein bL9 family.

Its function is as follows. Binds to the 23S rRNA. The polypeptide is Large ribosomal subunit protein bL9 (Francisella tularensis subsp. novicida (strain U112)).